A 226-amino-acid chain; its full sequence is Urease accessory protein UreF (226 aa).

The protein belongs to the UreF family. In terms of assembly, ureD, UreF and UreG form a complex that acts as a GTP-hydrolysis-dependent molecular chaperone, activating the urease apoprotein by helping to assemble the nickel containing metallocenter of UreC. The UreE protein probably delivers the nickel.

The protein resides in the cytoplasm. In terms of biological role, required for maturation of urease via the functional incorporation of the urease nickel metallocenter. The chain is Urease accessory protein UreF from Paraburkholderia xenovorans (strain LB400).